The sequence spans 426 residues: Serine--tRNA ligase (426 aa).

233–235 (TSE) is a binding site for L-serine. An ATP-binding site is contributed by 264–266 (RSE). Glu-287 is an L-serine binding site. ATP is bound at residue 351 to 354 (EISS). Position 387 (Ser-387) interacts with L-serine.

It belongs to the class-II aminoacyl-tRNA synthetase family. Type-1 seryl-tRNA synthetase subfamily. In terms of assembly, homodimer. The tRNA molecule binds across the dimer.

The protein localises to the cytoplasm. It catalyses the reaction tRNA(Ser) + L-serine + ATP = L-seryl-tRNA(Ser) + AMP + diphosphate + H(+). The catalysed reaction is tRNA(Sec) + L-serine + ATP = L-seryl-tRNA(Sec) + AMP + diphosphate + H(+). It participates in aminoacyl-tRNA biosynthesis; selenocysteinyl-tRNA(Sec) biosynthesis; L-seryl-tRNA(Sec) from L-serine and tRNA(Sec): step 1/1. Catalyzes the attachment of serine to tRNA(Ser). Is also able to aminoacylate tRNA(Sec) with serine, to form the misacylated tRNA L-seryl-tRNA(Sec), which will be further converted into selenocysteinyl-tRNA(Sec). This is Serine--tRNA ligase from Colwellia psychrerythraea (strain 34H / ATCC BAA-681) (Vibrio psychroerythus).